A 250-amino-acid chain; its full sequence is Flavin-dependent thymidylate synthase (250 aa).

Positions 7–233 (LRVQLIAKTD…PAVFADFEIA (227 aa)) constitute a ThyX domain. Residues S71, 95 to 97 (RHR), and Q103 contribute to the FAD site. Residues 92–95 (ELIR), 103–107 (QLSQR), and R172 each bind dUMP. A ThyX motif motif is present at residues 95–105 (RHRHFSYSQLS). Residues 188–190 (NYR) and H194 each bind FAD. Position 199 (R199) interacts with dUMP. Residue R199 is the Involved in ionization of N3 of dUMP, leading to its activation of the active site.

This sequence belongs to the thymidylate synthase ThyX family. In terms of assembly, homotetramer. It depends on FAD as a cofactor.

It carries out the reaction dUMP + (6R)-5,10-methylene-5,6,7,8-tetrahydrofolate + NADPH + H(+) = dTMP + (6S)-5,6,7,8-tetrahydrofolate + NADP(+). It functions in the pathway pyrimidine metabolism; dTTP biosynthesis. Functionally, catalyzes the reductive methylation of 2'-deoxyuridine-5'-monophosphate (dUMP) to 2'-deoxythymidine-5'-monophosphate (dTMP) while utilizing 5,10-methylenetetrahydrofolate (mTHF) as the methyl donor, and NADPH and FADH(2) as the reductant. This Mycobacterium avium (strain 104) protein is Flavin-dependent thymidylate synthase.